The primary structure comprises 243 residues: UPF0502 protein Rmet_3697 (243 aa).

Over residues 1-11 (MTDTPDTPDTP) the composition is skewed to low complexity. Positions 1-23 (MTDTPDTPDTPMATGASSRPPLR) are disordered.

The protein belongs to the UPF0502 family.

The protein is UPF0502 protein Rmet_3697 of Cupriavidus metallidurans (strain ATCC 43123 / DSM 2839 / NBRC 102507 / CH34) (Ralstonia metallidurans).